We begin with the raw amino-acid sequence, 224 residues long: Peptidyl-tRNA hydrolase (224 aa).

Residue tyrosine 27 coordinates tRNA. Histidine 32 acts as the Proton acceptor in catalysis. Residues tyrosine 78, asparagine 80, and asparagine 126 each coordinate tRNA. Residues 203-215 are compositionally biased toward low complexity; it reads LSGPSSDLDGSNP. The segment at 203 to 224 is disordered; it reads LSGPSSDLDGSNPAPGHGEASS.

It belongs to the PTH family. Monomer.

It localises to the cytoplasm. It catalyses the reaction an N-acyl-L-alpha-aminoacyl-tRNA + H2O = an N-acyl-L-amino acid + a tRNA + H(+). Its function is as follows. Hydrolyzes ribosome-free peptidyl-tRNAs (with 1 or more amino acids incorporated), which drop off the ribosome during protein synthesis, or as a result of ribosome stalling. Catalyzes the release of premature peptidyl moieties from peptidyl-tRNA molecules trapped in stalled 50S ribosomal subunits, and thus maintains levels of free tRNAs and 50S ribosomes. The sequence is that of Peptidyl-tRNA hydrolase from Synechococcus sp. (strain JA-2-3B'a(2-13)) (Cyanobacteria bacterium Yellowstone B-Prime).